The chain runs to 398 residues: GTPase Obg (398 aa).

Residues 1–159 form the Obg domain; the sequence is MKFVDEAPIS…RNLKLELKVL (159 aa). Positions 128-148 are disordered; the sequence is TRFKSSTNRVPRKTTPGTEGE. One can recognise an OBG-type G domain in the interval 160–333; the sequence is ADVGMLGLPN…LSGKIMDHLE (174 aa). GTP contacts are provided by residues 166 to 173, 191 to 195, 213 to 216, 283 to 286, and 314 to 316; these read GLPNAGKS, FTTLV, DIPG, NKID, and SAL. Mg(2+) is bound by residues serine 173 and threonine 193.

Belongs to the TRAFAC class OBG-HflX-like GTPase superfamily. OBG GTPase family. Monomer. It depends on Mg(2+) as a cofactor.

The protein resides in the cytoplasm. Its function is as follows. An essential GTPase which binds GTP, GDP and possibly (p)ppGpp with moderate affinity, with high nucleotide exchange rates and a fairly low GTP hydrolysis rate. Plays a role in control of the cell cycle, stress response, ribosome biogenesis and in those bacteria that undergo differentiation, in morphogenesis control. In Cellvibrio japonicus (strain Ueda107) (Pseudomonas fluorescens subsp. cellulosa), this protein is GTPase Obg.